The chain runs to 373 residues: LIM domain-binding protein 2 (373 aa).

2 disordered regions span residues 244-291 (APPA…ANLS) and 327-373 (QYDA…QASQ). Over residues 263-280 (STSSTSNSSAGNNANSTG) the composition is skewed to low complexity. Residues 298-337 (DVMVVGEPTLMGGEFGDEDERLITRLENTQYDAANGMDDE) form the LIM interaction domain (LID) domain. Polar residues predominate over residues 341–361 (NNSPALGNNSPWNSKPPATQE).

The protein belongs to the LDB family. In terms of assembly, interacts with LHX9. Interacts with SLK; leading to negatively regulate SLK kinase activity. Interacts with LMO4. In terms of processing, ubiquitinated by RLIM/RNF12, leading to its degradation by the proteasome.

Its subcellular location is the nucleus. Its function is as follows. Transcription cofactor. Binds to the LIM domain of a wide variety of LIM domain-containing transcription factors. The polypeptide is LIM domain-binding protein 2 (LDB2) (Homo sapiens (Human)).